A 330-amino-acid chain; its full sequence is Phosphate acyltransferase (330 aa).

The protein belongs to the PlsX family. As to quaternary structure, homodimer. Probably interacts with PlsY.

The protein localises to the cytoplasm. It carries out the reaction a fatty acyl-[ACP] + phosphate = an acyl phosphate + holo-[ACP]. The protein operates within lipid metabolism; phospholipid metabolism. In terms of biological role, catalyzes the reversible formation of acyl-phosphate (acyl-PO(4)) from acyl-[acyl-carrier-protein] (acyl-ACP). This enzyme utilizes acyl-ACP as fatty acyl donor, but not acyl-CoA. This chain is Phosphate acyltransferase, found in Streptococcus pneumoniae serotype 2 (strain D39 / NCTC 7466).